Consider the following 428-residue polypeptide: 3-phosphoshikimate 1-carboxyvinyltransferase (428 aa).

The 3-phosphoshikimate site is built by K22, S23, and R27. K22 contributes to the phosphoenolpyruvate binding site. Positions 96 and 124 each coordinate phosphoenolpyruvate. Residues S169, S170, Q171, S197, D313, N336, and K340 each contribute to the 3-phosphoshikimate site. Q171 is a phosphoenolpyruvate binding site. Catalysis depends on D313, which acts as the Proton acceptor. 3 residues coordinate phosphoenolpyruvate: R344, R386, and K411.

It belongs to the EPSP synthase family. Monomer.

Its subcellular location is the cytoplasm. The catalysed reaction is 3-phosphoshikimate + phosphoenolpyruvate = 5-O-(1-carboxyvinyl)-3-phosphoshikimate + phosphate. It functions in the pathway metabolic intermediate biosynthesis; chorismate biosynthesis; chorismate from D-erythrose 4-phosphate and phosphoenolpyruvate: step 6/7. Its function is as follows. Catalyzes the transfer of the enolpyruvyl moiety of phosphoenolpyruvate (PEP) to the 5-hydroxyl of shikimate-3-phosphate (S3P) to produce enolpyruvyl shikimate-3-phosphate and inorganic phosphate. This chain is 3-phosphoshikimate 1-carboxyvinyltransferase, found in Xenorhabdus nematophila (strain ATCC 19061 / DSM 3370 / CCUG 14189 / LMG 1036 / NCIMB 9965 / AN6).